We begin with the raw amino-acid sequence, 359 residues long: Methylthioribose-1-phosphate isomerase (359 aa).

Residues 52-54, Arg90, and Gln200 each bind substrate; that span reads RGA. Catalysis depends on Asp241, which acts as the Proton donor. 251–252 is a substrate binding site; it reads NK.

It belongs to the eIF-2B alpha/beta/delta subunits family. MtnA subfamily.

The enzyme catalyses 5-(methylsulfanyl)-alpha-D-ribose 1-phosphate = 5-(methylsulfanyl)-D-ribulose 1-phosphate. Its pathway is amino-acid biosynthesis; L-methionine biosynthesis via salvage pathway; L-methionine from S-methyl-5-thio-alpha-D-ribose 1-phosphate: step 1/6. In terms of biological role, catalyzes the interconversion of methylthioribose-1-phosphate (MTR-1-P) into methylthioribulose-1-phosphate (MTRu-1-P). This Sulfurimonas denitrificans (strain ATCC 33889 / DSM 1251) (Thiomicrospira denitrificans (strain ATCC 33889 / DSM 1251)) protein is Methylthioribose-1-phosphate isomerase.